Consider the following 682-residue polypeptide: Heat shock 70 kDa protein 9, mitochondrial (682 aa).

The transit peptide at 1-46 (MASVALLRSFRRREVQMASVSAFKSVSANGKNSMFGKLGYLARPFC) directs the protein to the mitochondrion. A disordered region spans residues 640 to 682 (SKIGEHMSKGSGSSGSDGSSGEGTSGTEQTPEAEFEEASGSRK). Over residues 651–663 (GSSGSDGSSGEGT) the composition is skewed to gly residues.

The protein belongs to the heat shock protein 70 (TC 1.A.33) family. DnaK subfamily. In terms of assembly, interacts with HSCB.

It localises to the mitochondrion. It is found in the cytoplasm. The protein resides in the cytosol. Its function is as follows. Chaperone involved in the maturation of iron-sulfur [Fe-S] cluster-containing proteins. Has a low intrinsic ATPase activity which is markedly stimulated by HSCB and ISU1. In cooperation with other chaperones, Hsp70s are key components that facilitate folding of de novo synthesized proteins, assist translocation of precursor proteins into organelles, and are responsible for degradation of damaged protein under stress conditions. The protein is Heat shock 70 kDa protein 9, mitochondrial of Arabidopsis thaliana (Mouse-ear cress).